The sequence spans 321 residues: uncharacterized protein (321 aa).

An N-terminal signal peptide occupies residues 1–22 (MKSIYKYTFMLFVFLFGTLMMA).

Belongs to the bacterial solute-binding protein 1 family. WtpA subfamily.

This is an uncharacterized protein from Petrotoga mobilis (strain DSM 10674 / SJ95).